A 290-amino-acid polypeptide reads, in one-letter code: Nucleotide-binding protein FN1089 (290 aa).

11-18 is a binding site for ATP; the sequence is GLSGAGKT. Residue 56–59 coordinates GTP; it reads DIRT.

This sequence belongs to the RapZ-like family.

Functionally, displays ATPase and GTPase activities. This Fusobacterium nucleatum subsp. nucleatum (strain ATCC 25586 / DSM 15643 / BCRC 10681 / CIP 101130 / JCM 8532 / KCTC 2640 / LMG 13131 / VPI 4355) protein is Nucleotide-binding protein FN1089.